The following is a 240-amino-acid chain: Methylthioribulose-1-phosphate dehydratase (240 aa).

The span at 1–10 shows a compositional bias: basic and acidic residues; that stretch reads MAQEIEKTNN. The segment at 1-20 is disordered; that stretch reads MAQEIEKTNNDHLVQSSDPE. Cysteine 100 serves as a coordination point for substrate. Zn(2+) is bound by residues histidine 117 and histidine 119. The active-site Proton donor/acceptor is glutamate 146. Histidine 202 serves as a coordination point for Zn(2+).

This sequence belongs to the aldolase class II family. MtnB subfamily. Zn(2+) is required as a cofactor.

The protein resides in the cytoplasm. The enzyme catalyses 5-(methylsulfanyl)-D-ribulose 1-phosphate = 5-methylsulfanyl-2,3-dioxopentyl phosphate + H2O. It participates in amino-acid biosynthesis; L-methionine biosynthesis via salvage pathway; L-methionine from S-methyl-5-thio-alpha-D-ribose 1-phosphate: step 2/6. Its function is as follows. Catalyzes the dehydration of methylthioribulose-1-phosphate (MTRu-1-P) into 2,3-diketo-5-methylthiopentyl-1-phosphate (DK-MTP-1-P). This is Methylthioribulose-1-phosphate dehydratase from Aspergillus fumigatus (strain CBS 144.89 / FGSC A1163 / CEA10) (Neosartorya fumigata).